The primary structure comprises 128 residues: Large ribosomal subunit protein bL12 (128 aa).

It belongs to the bacterial ribosomal protein bL12 family. In terms of assembly, homodimer. Part of the ribosomal stalk of the 50S ribosomal subunit. Forms a multimeric L10(L12)X complex, where L10 forms an elongated spine to which 2 to 4 L12 dimers bind in a sequential fashion. Binds GTP-bound translation factors.

In terms of biological role, forms part of the ribosomal stalk which helps the ribosome interact with GTP-bound translation factors. Is thus essential for accurate translation. The polypeptide is Large ribosomal subunit protein bL12 (Sulfurihydrogenibium sp. (strain YO3AOP1)).